A 332-amino-acid polypeptide reads, in one-letter code: Cytochrome c oxidase subunit 2 (332 aa).

The N-terminal stretch at Met-1–Ser-20 is a signal peptide. The next 2 membrane-spanning stretches (helical) occupy residues Met-48–Ile-68 and Val-87–Tyr-107. Cu cation is bound by residues His-214, Cys-249, Cys-253, and His-257.

Belongs to the cytochrome c oxidase subunit 2 family. The cofactor is Cu cation.

Its subcellular location is the cell membrane. The catalysed reaction is 4 Fe(II)-[cytochrome c] + O2 + 8 H(+)(in) = 4 Fe(III)-[cytochrome c] + 2 H2O + 4 H(+)(out). Its function is as follows. Subunits I and II form the functional core of the enzyme complex. Electrons originating in cytochrome c are transferred via heme a and Cu(A) to the binuclear center formed by heme a3 and Cu(B). In Synechocystis sp. (strain ATCC 27184 / PCC 6803 / Kazusa), this protein is Cytochrome c oxidase subunit 2 (ctaC).